A 780-amino-acid chain; its full sequence is ATP-dependent 6-phosphofructokinase, muscle type (780 aa).

N-acetylthreonine is present on Thr2. Positions 2–390 (THEEHHAAKT…NWEVYKLLAH (389 aa)) are N-terminal catalytic PFK domain 1. ATP-binding positions include Gly25, 88–89 (RC), and 118–121 (GDGS). Position 119 (Asp119) interacts with Mg(2+). Ser133 bears the Phosphoserine mark. Substrate contacts are provided by residues 164-166 (SID), Arg201, 208-210 (MGR), Glu264, Arg292, and 298-301 (HVQR). The active-site Proton acceptor is the Asp166. Ser377 carries the post-translational modification Phosphoserine. Positions 391–401 (VRPPVSKSGSH) are interdomain linker. Residues 402 to 780 (TVAVMNVGAP…TRKRSGEAAV (379 aa)) are C-terminal regulatory PFK domain 2. Residues Arg471 and 528-532 (TVSNN) each bind beta-D-fructose 2,6-bisphosphate. Ser530 carries an O-linked (GlcNAc) serine glycan. An N6-(2-hydroxyisobutyryl)lysine modification is found at Lys557. Beta-D-fructose 2,6-bisphosphate is bound by residues Arg566, 573-575 (MGG), Glu629, Arg655, and 661-664 (HMQQ). The residue at position 667 (Ser667) is a Phosphoserine. Arg735 contributes to the beta-D-fructose 2,6-bisphosphate binding site. At Ser775 the chain carries Phosphoserine.

The protein belongs to the phosphofructokinase type A (PFKA) family. ATP-dependent PFK group I subfamily. Eukaryotic two domain clade 'E' sub-subfamily. As to quaternary structure, homo- and heterotetramers. Phosphofructokinase (PFK) enzyme functions as a tetramer composed of different combinations of 3 types of subunits, called PFKM (where M stands for Muscle), PFKL (Liver) and PFKP (Platelet). The composition of the PFK tetramer differs according to the tissue type it is present in. In muscles, it is composed of 4 PFKM subunits (also called M4). In the liver, the predominant form is a tetramer of PFKL subunits (L4). In erythrocytes, both PFKM and PFKL subunits randomly tetramerize to form M4, L4 and other combinations (ML3, M2L2, M3L). The kinetic and regulatory properties of the tetrameric enzyme are dependent on the subunit composition, hence can vary across tissues. Interacts (via C-terminus) with HK1 (via N-terminal spermatogenic cell-specific region). Mg(2+) is required as a cofactor. GlcNAcylation decreases enzyme activity.

Its subcellular location is the cytoplasm. The enzyme catalyses beta-D-fructose 6-phosphate + ATP = beta-D-fructose 1,6-bisphosphate + ADP + H(+). It functions in the pathway carbohydrate degradation; glycolysis; D-glyceraldehyde 3-phosphate and glycerone phosphate from D-glucose: step 3/4. With respect to regulation, allosterically activated by ADP, AMP, or fructose 2,6-bisphosphate, and allosterically inhibited by ATP or citrate. In terms of biological role, catalyzes the phosphorylation of D-fructose 6-phosphate to fructose 1,6-bisphosphate by ATP, the first committing step of glycolysis. The polypeptide is ATP-dependent 6-phosphofructokinase, muscle type (PFKM) (Homo sapiens (Human)).